A 344-amino-acid chain; its full sequence is DNA polymerase IV (344 aa).

Residues 2–183 (IMLIDFDYFF…IKINDIPGIG (182 aa)) enclose the UmuC domain. Residues Asp6 and Asp105 each contribute to the Mg(2+) site. Glu106 is a catalytic residue.

This sequence belongs to the DNA polymerase type-Y family. As to quaternary structure, monomer. The cofactor is Mg(2+).

It localises to the cytoplasm. The catalysed reaction is DNA(n) + a 2'-deoxyribonucleoside 5'-triphosphate = DNA(n+1) + diphosphate. In terms of biological role, poorly processive, error-prone DNA polymerase involved in untargeted mutagenesis. Copies undamaged DNA at stalled replication forks, which arise in vivo from mismatched or misaligned primer ends. These misaligned primers can be extended by PolIV. Exhibits no 3'-5' exonuclease (proofreading) activity. May be involved in translesional synthesis. This is DNA polymerase IV from Picrophilus torridus (strain ATCC 700027 / DSM 9790 / JCM 10055 / NBRC 100828 / KAW 2/3).